The primary structure comprises 444 residues: tRNA-2-methylthio-N(6)-dimethylallyladenosine synthase (444 aa).

The MTTase N-terminal domain maps to 2-119 (KKVYIKTFGC…LPDLIESRKQ (118 aa)). [4Fe-4S] cluster contacts are provided by cysteine 11, cysteine 48, cysteine 82, cysteine 156, cysteine 160, and cysteine 163. A Radical SAM core domain is found at 142–374 (KVDGGAAFVS…NEVIEAKGYA (233 aa)). The TRAM domain maps to 377–440 (QSMVGTVQRV…PHSLAGEALT (64 aa)).

Belongs to the methylthiotransferase family. MiaB subfamily. As to quaternary structure, monomer. The cofactor is [4Fe-4S] cluster.

The protein localises to the cytoplasm. The enzyme catalyses N(6)-dimethylallyladenosine(37) in tRNA + (sulfur carrier)-SH + AH2 + 2 S-adenosyl-L-methionine = 2-methylsulfanyl-N(6)-dimethylallyladenosine(37) in tRNA + (sulfur carrier)-H + 5'-deoxyadenosine + L-methionine + A + S-adenosyl-L-homocysteine + 2 H(+). Catalyzes the methylthiolation of N6-(dimethylallyl)adenosine (i(6)A), leading to the formation of 2-methylthio-N6-(dimethylallyl)adenosine (ms(2)i(6)A) at position 37 in tRNAs that read codons beginning with uridine. The polypeptide is tRNA-2-methylthio-N(6)-dimethylallyladenosine synthase (Chromobacterium violaceum (strain ATCC 12472 / DSM 30191 / JCM 1249 / CCUG 213 / NBRC 12614 / NCIMB 9131 / NCTC 9757 / MK)).